Here is a 33-residue protein sequence, read N- to C-terminus: Protamine TP16 (33 aa).

Positions 1 to 33 are disordered; sequence MPRRRRSSSRPVRRRRRARVSRRRRRRGRRRRR.

As to expression, testis.

The protein localises to the nucleus. It is found in the chromosome. Its function is as follows. Protamines substitute for histones in the chromatin of sperm during the haploid phase of spermatogenesis. They compact sperm DNA into a highly condensed, stable and inactive complex. The protein is Protamine TP16 of Oncorhynchus mykiss (Rainbow trout).